A 187-amino-acid polypeptide reads, in one-letter code: Peptidyl-tRNA hydrolase (187 aa).

Tyr-15 provides a ligand contact to tRNA. His-20 functions as the Proton acceptor in the catalytic mechanism. The tRNA site is built by Phe-65, Asn-67, and Asn-113.

Belongs to the PTH family. As to quaternary structure, monomer.

The protein resides in the cytoplasm. The enzyme catalyses an N-acyl-L-alpha-aminoacyl-tRNA + H2O = an N-acyl-L-amino acid + a tRNA + H(+). In terms of biological role, hydrolyzes ribosome-free peptidyl-tRNAs (with 1 or more amino acids incorporated), which drop off the ribosome during protein synthesis, or as a result of ribosome stalling. Its function is as follows. Catalyzes the release of premature peptidyl moieties from peptidyl-tRNA molecules trapped in stalled 50S ribosomal subunits, and thus maintains levels of free tRNAs and 50S ribosomes. This Elusimicrobium minutum (strain Pei191) protein is Peptidyl-tRNA hydrolase.